We begin with the raw amino-acid sequence, 88 residues long: Cell division topological specificity factor (88 aa).

The protein belongs to the MinE family.

Functionally, prevents the cell division inhibition by proteins MinC and MinD at internal division sites while permitting inhibition at polar sites. This ensures cell division at the proper site by restricting the formation of a division septum at the midpoint of the long axis of the cell. The polypeptide is Cell division topological specificity factor (Aeromonas hydrophila subsp. hydrophila (strain ATCC 7966 / DSM 30187 / BCRC 13018 / CCUG 14551 / JCM 1027 / KCTC 2358 / NCIMB 9240 / NCTC 8049)).